Here is a 219-residue protein sequence, read N- to C-terminus: GPI-anchored hemophore PGA7 (219 aa).

The first 13 residues, 1–13 (MHFIFYLILLVSA), serve as a signal peptide directing secretion. Residues 17 to 126 (GNFGTYPKVP…SMLSTAAGDA (110 aa)) enclose the CFEM domain. Cystine bridges form between cysteine 45–cysteine 85, cysteine 49–cysteine 80, cysteine 59–cysteine 66, and cysteine 68–cysteine 101. Aspartate 63 serves as a coordination point for heme. The disordered stretch occupies residues 151–194 (VVSETGSASETGSSESAQSTTTGSSSTGSSSTDSSSSSSSSPSS). Over residues 153–194 (SETGSASETGSSESAQSTTTGSSSTGSSSTDSSSSSSSSPSS) the composition is skewed to low complexity. Serine 194 carries GPI-anchor amidated serine lipidation. Residues 195–219 (SANFAVLQTGGIGSVILGFMMYLLV) constitute a propeptide, removed in mature form.

This sequence belongs to the RBT5 family. Interacts with RBT5. The GPI-anchor is attached to the protein in the endoplasmic reticulum and serves to target the protein to the cell surface. There, the glucosamine-inositol phospholipid moiety is cleaved off and the GPI-modified mannoprotein is covalently attached via its lipidless GPI glycan remnant to the 1,6-beta-glucan of the outer cell wall layer.

It localises to the secreted. The protein resides in the cell wall. Its subcellular location is the cell membrane. In terms of biological role, GPI-linked hyphal surface heme-binding protein involved in heme-iron utilization. Heme transfer occurs between PGA7, RBT5 and CSA2 supporting a model in which the 3 CFEM proteins cooperate in a heme-acquisition system and form a cross-cell wall heme-transfer cascade. The ability to acquire iron from host tissues is a major virulence factor of pathogenic microorganisms. Required for biofilm formation. The chain is GPI-anchored hemophore PGA7 from Candida albicans (strain SC5314 / ATCC MYA-2876) (Yeast).